The sequence spans 150 residues: Flagellar assembly factor FliW (150 aa).

This sequence belongs to the FliW family. Interacts with translational regulator CsrA and flagellin(s).

Its subcellular location is the cytoplasm. In terms of biological role, acts as an anti-CsrA protein, binds CsrA and prevents it from repressing translation of its target genes, one of which is flagellin. Binds to flagellin and participates in the assembly of the flagellum. This is Flagellar assembly factor FliW from Caldanaerobacter subterraneus subsp. tengcongensis (strain DSM 15242 / JCM 11007 / NBRC 100824 / MB4) (Thermoanaerobacter tengcongensis).